The primary structure comprises 315 residues: Putative steroid dehydrogenase 2 (315 aa).

An NADP(+)-binding site is contributed by 47 to 76; that stretch reads ASWAVVTGATDGIGKSYSFELARRGFNVYI. Residue Tyr202 is part of the active site.

The protein belongs to the short-chain dehydrogenases/reductases (SDR) family. 17-beta-HSD 3 subfamily.

The sequence is that of Putative steroid dehydrogenase 2 (stdh-2) from Caenorhabditis elegans.